A 281-amino-acid polypeptide reads, in one-letter code: NADPH-dependent 7-cyano-7-deazaguanine reductase (281 aa).

Substrate is bound at residue 87–89 (IES). 89-90 (SK) is a binding site for NADPH. Residue cysteine 188 is the Thioimide intermediate of the active site. The active-site Proton donor is the aspartate 195. Position 227 to 228 (227 to 228 (HE)) interacts with substrate. 256 to 257 (RG) is a binding site for NADPH. The tract at residues 261 to 281 (INPYRSTEQDKPAHNNRMARQ) is disordered.

It belongs to the GTP cyclohydrolase I family. QueF type 2 subfamily. As to quaternary structure, homodimer.

It localises to the cytoplasm. It carries out the reaction 7-aminomethyl-7-carbaguanine + 2 NADP(+) = 7-cyano-7-deazaguanine + 2 NADPH + 3 H(+). It participates in tRNA modification; tRNA-queuosine biosynthesis. Functionally, catalyzes the NADPH-dependent reduction of 7-cyano-7-deazaguanine (preQ0) to 7-aminomethyl-7-deazaguanine (preQ1). This chain is NADPH-dependent 7-cyano-7-deazaguanine reductase, found in Vibrio campbellii (strain ATCC BAA-1116).